A 364-amino-acid chain; its full sequence is F-box protein At1g59680 (364 aa).

One can recognise an F-box domain in the interval 2 to 49; the sequence is TTMSDLSVDLVGEILSRVPLTSLSAVRCTCKSWNTLSKHQIFGKAELA.

This is F-box protein At1g59680 from Arabidopsis thaliana (Mouse-ear cress).